The following is a 653-amino-acid chain: MAEPLLQLTRVTRRFPAGDKDVVVLDDVSLSIDAGEIVAIVGASGSGKSTLMNILGCLDHPSSGSYRVGARETSELESDELARLRREHFGFIFQRYHLLPHLSAAENVEMPAVYAGSAQAQRRERALMLLARLGLSDRAGHRPSQLSGGQQQRVSIARALMNGGEVILADEPTGALDSKSGHDVIRVLRELNALGHTVIIVTHDENVAAHARRIIEISDGRIVGDRLNPHADGADAASGASGDAGPQRARRLSAGVGRFAEAFRMAWIALVSHRLRTLLTMLGIIIGITSVVSIVAIGEGAKRYMLDEIGSIGTNTINVYPGADWGDSRADAIQTLVPADAAALADQIYVDSATPETSRSLLLRYRNIDVNALVSGVGERFFQVRGMKMAQGIAFGPDEVRRQAQVAVIDENTRRKLFGANPNPLGEVILIDNLPCIVIGVTAAKKSAFGDTKNLNVWVPYTTASGRLFGQRHLDSITVRVRDGQPSAAAEQSLTKLMLQRHGRKDFFTYNMDSVVKTVEKTGQSLTLLLSLIAVISLVVGGIGVMNIMLVSVTERTREIGIRMAVGARQADIMQQFLVEAVTVCLMGGAIGIVLSLGMSFVFSLFVDQWKMVFSAGSIVSAFLCSTLIGVVFGFMPARNASRLDPIDALARD.

Positions 6-244 (LQLTRVTRRF…DAASGASGDA (239 aa)) constitute an ABC transporter domain. Residue 42–49 (GASGSGKS) coordinates ATP. Helical transmembrane passes span 278–298 (LLTM…VAIG), 526–546 (LTLL…IGVM), 587–607 (MGGA…SLFV), and 616–636 (AGSI…FGFM).

The protein belongs to the ABC transporter superfamily. Macrolide exporter (TC 3.A.1.122) family. In terms of assembly, homodimer.

The protein localises to the cell inner membrane. Its function is as follows. Non-canonical ABC transporter that contains transmembrane domains (TMD), which form a pore in the inner membrane, and an ATP-binding domain (NBD), which is responsible for energy generation. Confers resistance against macrolides. The sequence is that of Macrolide export ATP-binding/permease protein MacB from Burkholderia thailandensis (strain ATCC 700388 / DSM 13276 / CCUG 48851 / CIP 106301 / E264).